The following is a 624-amino-acid chain: Chaperone protein HtpG (624 aa).

The a; substrate-binding stretch occupies residues Met-1–Arg-338. Residues Glu-339–Lys-552 form a b region. A c region spans residues Ile-553–Ser-624.

Belongs to the heat shock protein 90 family. In terms of assembly, homodimer.

The protein localises to the cytoplasm. Molecular chaperone. Has ATPase activity. The sequence is that of Chaperone protein HtpG from Buchnera aphidicola subsp. Cinara cedri (strain Cc).